A 464-amino-acid polypeptide reads, in one-letter code: Arginine biosynthesis bifunctional protein ArgJ, chloroplastic (464 aa).

Residues Thr-208, Lys-234, Thr-245, Glu-332, Asn-459, and Thr-464 each coordinate substrate. Thr-245 acts as the Nucleophile in catalysis.

Belongs to the ArgJ family. In terms of assembly, heterodimer of an alpha and a beta chain.

The protein resides in the plastid. It localises to the chloroplast. The enzyme catalyses N(2)-acetyl-L-ornithine + L-glutamate = N-acetyl-L-glutamate + L-ornithine. It carries out the reaction L-glutamate + acetyl-CoA = N-acetyl-L-glutamate + CoA + H(+). It functions in the pathway amino-acid biosynthesis; L-arginine biosynthesis; L-ornithine and N-acetyl-L-glutamate from L-glutamate and N(2)-acetyl-L-ornithine (cyclic): step 1/1. Its pathway is amino-acid biosynthesis; L-arginine biosynthesis; N(2)-acetyl-L-ornithine from L-glutamate: step 1/4. Catalyzes two activities which are involved in the cyclic version of arginine biosynthesis: the synthesis of acetylglutamate from glutamate and acetyl-CoA, and of ornithine by transacetylation between acetylornithine and glutamate. The sequence is that of Arginine biosynthesis bifunctional protein ArgJ, chloroplastic from Sorghum bicolor (Sorghum).